We begin with the raw amino-acid sequence, 205 residues long: MSKRESSKYKIDRRMGENIWGRPKSPVNRREYGPGQHGQRRKGKLSDFGVQLRAKQKLKGYYGDLREKQFRATFDEANRRKGDTSENLIGLLESRLDAIVYRAKFVPTVFAARQFVNHGHVTVNGVRVNIGSYRCKAGDVIEVREKSKQLVIVLESVSLAERDVPDYIEVDHNKMVATFARVPTLADVPYAVVMEPQLVVEFYSR.

Residues 1 to 16 (MSKRESSKYKIDRRMG) show a composition bias toward basic and acidic residues. Positions 1 to 46 (MSKRESSKYKIDRRMGENIWGRPKSPVNRREYGPGQHGQRRKGKLS) are disordered. The region spanning 94-157 (SRLDAIVYRA…KQLVIVLESV (64 aa)) is the S4 RNA-binding domain.

Belongs to the universal ribosomal protein uS4 family. In terms of assembly, part of the 30S ribosomal subunit. Contacts protein S5. The interaction surface between S4 and S5 is involved in control of translational fidelity.

Functionally, one of the primary rRNA binding proteins, it binds directly to 16S rRNA where it nucleates assembly of the body of the 30S subunit. In terms of biological role, with S5 and S12 plays an important role in translational accuracy. This Rhizobium rhizogenes (strain K84 / ATCC BAA-868) (Agrobacterium radiobacter) protein is Small ribosomal subunit protein uS4.